The following is a 193-amino-acid chain: Fe/S biogenesis protein NfuA (193 aa).

Residues Cys-150 and Cys-153 each coordinate [4Fe-4S] cluster.

This sequence belongs to the NfuA family. As to quaternary structure, homodimer. It depends on [4Fe-4S] cluster as a cofactor.

Involved in iron-sulfur cluster biogenesis. Binds a 4Fe-4S cluster, can transfer this cluster to apoproteins, and thereby intervenes in the maturation of Fe/S proteins. Could also act as a scaffold/chaperone for damaged Fe/S proteins. The sequence is that of Fe/S biogenesis protein NfuA from Histophilus somni (strain 129Pt) (Haemophilus somnus).